A 546-amino-acid chain; its full sequence is Chaperonin GroEL (546 aa).

Residues 30–33 (TLGP), Lys51, 87–91 (DGTTT), Gly415, and Asp495 each bind ATP.

The protein belongs to the chaperonin (HSP60) family. In terms of assembly, forms a cylinder of 14 subunits composed of two heptameric rings stacked back-to-back. Interacts with the co-chaperonin GroES.

The protein resides in the cytoplasm. The enzyme catalyses ATP + H2O + a folded polypeptide = ADP + phosphate + an unfolded polypeptide.. In terms of biological role, together with its co-chaperonin GroES, plays an essential role in assisting protein folding. The GroEL-GroES system forms a nano-cage that allows encapsulation of the non-native substrate proteins and provides a physical environment optimized to promote and accelerate protein folding. The chain is Chaperonin GroEL from Brucella suis (strain ATCC 23445 / NCTC 10510).